The chain runs to 90 residues: Small ribosomal subunit protein uS17 (90 aa).

The protein belongs to the universal ribosomal protein uS17 family. Part of the 30S ribosomal subunit.

One of the primary rRNA binding proteins, it binds specifically to the 5'-end of 16S ribosomal RNA. This is Small ribosomal subunit protein uS17 from Burkholderia multivorans (strain ATCC 17616 / 249).